The primary structure comprises 218 residues: N-(5'-phosphoribosyl)anthranilate isomerase (218 aa).

It belongs to the TrpF family.

The enzyme catalyses N-(5-phospho-beta-D-ribosyl)anthranilate = 1-(2-carboxyphenylamino)-1-deoxy-D-ribulose 5-phosphate. It participates in amino-acid biosynthesis; L-tryptophan biosynthesis; L-tryptophan from chorismate: step 3/5. This chain is N-(5'-phosphoribosyl)anthranilate isomerase, found in Alcanivorax borkumensis (strain ATCC 700651 / DSM 11573 / NCIMB 13689 / SK2).